A 272-amino-acid polypeptide reads, in one-letter code: Shikimate dehydrogenase (NADP(+)) (272 aa).

Shikimate contacts are provided by residues 14 to 16 (SLS) and T61. Catalysis depends on K65, which acts as the Proton acceptor. Shikimate is bound at residue D102. Residues 127–131 (GAGGA), 151–156 (NRTPSK), and L215 contribute to the NADP(+) site. A shikimate-binding site is contributed by Y217. An NADP(+)-binding site is contributed by G239.

This sequence belongs to the shikimate dehydrogenase family. In terms of assembly, homodimer.

The enzyme catalyses shikimate + NADP(+) = 3-dehydroshikimate + NADPH + H(+). It functions in the pathway metabolic intermediate biosynthesis; chorismate biosynthesis; chorismate from D-erythrose 4-phosphate and phosphoenolpyruvate: step 4/7. In terms of biological role, involved in the biosynthesis of the chorismate, which leads to the biosynthesis of aromatic amino acids. Catalyzes the reversible NADPH linked reduction of 3-dehydroshikimate (DHSA) to yield shikimate (SA). The chain is Shikimate dehydrogenase (NADP(+)) from Coxiella burnetii (strain CbuK_Q154) (Coxiella burnetii (strain Q154)).